The chain runs to 571 residues: Probable pectinesterase/pectinesterase inhibitor 58 (571 aa).

The first 28 residues, 1–28 (MGVDGELKKKKCIIAGVITALLVLMVVA), serve as a signal peptide directing secretion. Asn-36, Asn-91, Asn-207, and Asn-216 each carry an N-linked (GlcNAc...) asparagine glycan. A pectinesterase inhibitor 58 region spans residues 49–204 (KTATTAVEAV…RELTSNGLAM (156 aa)). Residues 259–556 (NVVVAHDGSG…FTPARFLRGN (298 aa)) form a pectinesterase 58 region. Thr-335 lines the substrate pocket. Asn-347 carries N-linked (GlcNAc...) asparagine glycosylation. Gln-365 contacts substrate. Catalysis depends on Asp-388, which acts as the Proton donor; for pectinesterase activity. The cysteines at positions 402 and 422 are disulfide-linked. Catalysis depends on Asp-409, which acts as the Nucleophile; for pectinesterase activity. Substrate is bound by residues Arg-477 and Trp-479.

The protein in the N-terminal section; belongs to the PMEI family. It in the C-terminal section; belongs to the pectinesterase family. As to expression, expressed in siliques, but not in flower buds.

The protein resides in the secreted. The protein localises to the cell wall. It catalyses the reaction [(1-&gt;4)-alpha-D-galacturonosyl methyl ester](n) + n H2O = [(1-&gt;4)-alpha-D-galacturonosyl](n) + n methanol + n H(+). Its pathway is glycan metabolism; pectin degradation; 2-dehydro-3-deoxy-D-gluconate from pectin: step 1/5. Its function is as follows. Acts in the modification of cell walls via demethylesterification of cell wall pectin. The protein is Probable pectinesterase/pectinesterase inhibitor 58 (PME58) of Arabidopsis thaliana (Mouse-ear cress).